A 133-amino-acid polypeptide reads, in one-letter code: MSWQTYVDDHLMCDIEGTGQHLTAAAILGLDGTVWAKSDKFPEFKPEEMKGIINEFNEVGTLAPTGLFLGGAKYMVLQGEAGAVIRGKKGAGGICIKKTGQAMVMGIYDEPVAPGQCNMIVERLGDYLVDQNM.

The protein belongs to the profilin family. Occurs in many kinds of cells as a complex with monomeric actin in a 1:1 ratio.

It is found in the cytoplasm. It localises to the cytoskeleton. In terms of biological role, binds to actin and affects the structure of the cytoskeleton. At high concentrations, profilin prevents the polymerization of actin, whereas it enhances it at low concentrations. By binding to PIP2, it inhibits the formation of IP3 and DG. The polypeptide is Profilin-2 (Artemisia vulgaris (Mugwort)).